The primary structure comprises 388 residues: LL-diaminopimelate aminotransferase (388 aa).

Substrate contacts are provided by tyrosine 13, glycine 38, lysine 102, tyrosine 126, and asparagine 176. Residues 101-102 (SK), tyrosine 126, asparagine 176, tyrosine 207, and 235-237 (SLS) each bind pyridoxal 5'-phosphate. Residue lysine 238 is modified to N6-(pyridoxal phosphate)lysine. Residue arginine 246 coordinates pyridoxal 5'-phosphate. Arginine 364 contributes to the substrate binding site.

The protein belongs to the class-I pyridoxal-phosphate-dependent aminotransferase family. LL-diaminopimelate aminotransferase subfamily. Homodimer. Pyridoxal 5'-phosphate serves as cofactor.

The enzyme catalyses (2S,6S)-2,6-diaminopimelate + 2-oxoglutarate = (S)-2,3,4,5-tetrahydrodipicolinate + L-glutamate + H2O + H(+). Its pathway is amino-acid biosynthesis; L-lysine biosynthesis via DAP pathway; LL-2,6-diaminopimelate from (S)-tetrahydrodipicolinate (aminotransferase route): step 1/1. Functionally, involved in the synthesis of meso-diaminopimelate (m-DAP or DL-DAP), required for both lysine and peptidoglycan biosynthesis. Catalyzes the direct conversion of tetrahydrodipicolinate to LL-diaminopimelate. The chain is LL-diaminopimelate aminotransferase from Dehalococcoides mccartyi (strain ATCC BAA-2266 / KCTC 15142 / 195) (Dehalococcoides ethenogenes (strain 195)).